We begin with the raw amino-acid sequence, 70 residues long: Small ribosomal subunit protein bS21 (70 aa).

The protein belongs to the bacterial ribosomal protein bS21 family.

The protein is Small ribosomal subunit protein bS21 of Sulfurovum sp. (strain NBC37-1).